Consider the following 432-residue polypeptide: Solute carrier family 38 member 8 (432 aa).

Transmembrane regions (helical) follow at residues 29–49 (AVFI…PWAF), 59–79 (FLVA…LGYA), 103–123 (LCEI…LRVI), 144–164 (AAQN…LSAL), 175–195 (ILGT…YYLW), 215–237 (VFSV…SIYC), 253–273 (LSLL…FLTF), 292–312 (IIVA…IVLF), 345–365 (LPLT…LPDL), 368–388 (IISI…GLCL), and 409–429 (GILS…VAMV).

This sequence belongs to the amino acid/polyamine transporter 2 family. Expressed in neurons located in the gray matter. Highly expressed in thalamus, hypothalamus, amygdala and pons. Expressed in the CA3 area of hippocampus and in the Purkinje layer of the cerebellum (at protein level). Expressed in the eye.

It is found in the membrane. The protein localises to the cytoplasm. Its subcellular location is the cell cortex. The protein resides in the cell projection. It localises to the axon. The catalysed reaction is L-glutamine(out) = L-glutamine(in). It catalyses the reaction L-alanine(in) = L-alanine(out). The enzyme catalyses L-histidine(out) = L-histidine(in). It carries out the reaction L-aspartate(out) = L-aspartate(in). The catalysed reaction is L-arginine(in) = L-arginine(out). It catalyses the reaction L-leucine(in) = L-leucine(out). Electrogenic sodium-dependent amino acid transporter with a preference for L-glutamine, L-alanine, L-histidine, L-aspartate and L-arginine. May facilitate glutamine uptake in both excitatory and inhibitory neurons. The transport mechanism and stoichiometry remain to be elucidated. This chain is Solute carrier family 38 member 8, found in Mus musculus (Mouse).